A 134-amino-acid polypeptide reads, in one-letter code: Neuropeptide-like peptide 11 (134 aa).

Residues 1-20 form the signal peptide; sequence MMSTLALVSLAIFGIAVVCA. Positions 21–106 are excised as a propeptide; the sequence is APKPATVPVA…YNRLIDAGKK (86 aa). A131 is subject to Alanine amide.

This is Neuropeptide-like peptide 11 (nlp-11) from Caenorhabditis elegans.